The chain runs to 441 residues: UDP-N-acetylglucosamine--peptide N-acetylglucosaminyltransferase stabilizing protein GtfB (441 aa).

The protein belongs to the GtfB family. As to quaternary structure, forms a heterotetramer with 2 subunits each of GtfA and GtfB. Part of the accessory SecA2/SecY2 protein translocation apparatus.

It is found in the cell membrane. The protein operates within protein modification; protein glycosylation. Its function is as follows. Required for polymorphic O-glycosylation of the serine-rich repeat protein (SRRP) in this bacteria. A stabilizing protein that is part of the accessory SecA2/SecY2 system specifically required to export serine-rich repeat cell wall proteins encoded in the same operon. The GtfA-GtfB complex adds GlcNAc from UDP-GlcNAc to the substrate protein, attaching the first sugar residue. Stabilizes the glycosylation activity of GtfA. Has no N-acetylglucosaminyl transferase activity on its own. The chain is UDP-N-acetylglucosamine--peptide N-acetylglucosaminyltransferase stabilizing protein GtfB from Limosilactobacillus reuteri subsp. suis (strain ATCC 53608 / LMG 31752 / 1063) (Lactobacillus reuteri).